The primary structure comprises 188 residues: Augmin complex subunit dgt4 (188 aa).

Residues 141–163 (QREFAQNQEALRSLRTAVDGLEN) are a coiled coil.

In terms of assembly, component of the augmin complex composed of dgt2, dgt3, dgt4, dgt5, dgt6, msd1, msd5 and wac. The complex interacts directly or indirectly with microtubules and is required for centrosome-independent generation of spindle microtubules.

Its subcellular location is the cytoplasm. It is found in the cytoskeleton. It localises to the spindle. As part of the augmin complex, plays a role in centrosome-independent generation of spindle microtubules. The complex is required for mitotic spindle assembly through its involvement in localizing gamma-tubulin to spindle microtubules. This Drosophila melanogaster (Fruit fly) protein is Augmin complex subunit dgt4.